The sequence spans 214 residues: Pyridoxine/pyridoxamine 5'-phosphate oxidase (214 aa).

Substrate contacts are provided by residues 9-12 (RREY) and K67. FMN-binding positions include 62 to 67 (RTVLLK), 77 to 78 (YS), R83, K84, and Q106. Y124, R128, and S132 together coordinate substrate. Residues 141 to 142 (QS) and W186 each bind FMN. 192–194 (RLH) lines the substrate pocket. R196 serves as a coordination point for FMN.

It belongs to the pyridoxamine 5'-phosphate oxidase family. In terms of assembly, homodimer. FMN serves as cofactor.

The enzyme catalyses pyridoxamine 5'-phosphate + O2 + H2O = pyridoxal 5'-phosphate + H2O2 + NH4(+). It carries out the reaction pyridoxine 5'-phosphate + O2 = pyridoxal 5'-phosphate + H2O2. It functions in the pathway cofactor metabolism; pyridoxal 5'-phosphate salvage; pyridoxal 5'-phosphate from pyridoxamine 5'-phosphate: step 1/1. The protein operates within cofactor metabolism; pyridoxal 5'-phosphate salvage; pyridoxal 5'-phosphate from pyridoxine 5'-phosphate: step 1/1. In terms of biological role, catalyzes the oxidation of either pyridoxine 5'-phosphate (PNP) or pyridoxamine 5'-phosphate (PMP) into pyridoxal 5'-phosphate (PLP). The protein is Pyridoxine/pyridoxamine 5'-phosphate oxidase of Porphyromonas gingivalis (strain ATCC BAA-308 / W83).